The following is a 296-amino-acid chain: Phosphatidylserine decarboxylase proenzyme (296 aa).

Catalysis depends on charge relay system; for autoendoproteolytic cleavage activity residues Asp-113, His-169, and Ser-256. The Schiff-base intermediate with substrate; via pyruvic acid; for decarboxylase activity role is filled by Ser-256. Ser-256 bears the Pyruvic acid (Ser); by autocatalysis mark.

Belongs to the phosphatidylserine decarboxylase family. PSD-B subfamily. Prokaryotic type II sub-subfamily. As to quaternary structure, heterodimer of a large membrane-associated beta subunit and a small pyruvoyl-containing alpha subunit. It depends on pyruvate as a cofactor. Is synthesized initially as an inactive proenzyme. Formation of the active enzyme involves a self-maturation process in which the active site pyruvoyl group is generated from an internal serine residue via an autocatalytic post-translational modification. Two non-identical subunits are generated from the proenzyme in this reaction, and the pyruvate is formed at the N-terminus of the alpha chain, which is derived from the carboxyl end of the proenzyme. The autoendoproteolytic cleavage occurs by a canonical serine protease mechanism, in which the side chain hydroxyl group of the serine supplies its oxygen atom to form the C-terminus of the beta chain, while the remainder of the serine residue undergoes an oxidative deamination to produce ammonia and the pyruvoyl prosthetic group on the alpha chain. During this reaction, the Ser that is part of the protease active site of the proenzyme becomes the pyruvoyl prosthetic group, which constitutes an essential element of the active site of the mature decarboxylase.

It localises to the cell membrane. It catalyses the reaction a 1,2-diacyl-sn-glycero-3-phospho-L-serine + H(+) = a 1,2-diacyl-sn-glycero-3-phosphoethanolamine + CO2. It functions in the pathway phospholipid metabolism; phosphatidylethanolamine biosynthesis; phosphatidylethanolamine from CDP-diacylglycerol: step 2/2. Its function is as follows. Catalyzes the formation of phosphatidylethanolamine (PtdEtn) from phosphatidylserine (PtdSer). The sequence is that of Phosphatidylserine decarboxylase proenzyme from Clostridium botulinum (strain Alaska E43 / Type E3).